We begin with the raw amino-acid sequence, 274 residues long: Proteasome subunit beta (274 aa).

The propeptide at 1 to 52 (MPDPTGVAGRLPAVFMTPGTSSFTDFLSVAAPDLLPGARGPLPAPVTDAAHG) is removed in mature form; by autocatalysis. T53 (nucleophile) is an active-site residue.

It belongs to the peptidase T1B family. As to quaternary structure, the 20S proteasome core is composed of 14 alpha and 14 beta subunits that assemble into four stacked heptameric rings, resulting in a barrel-shaped structure. The two inner rings, each composed of seven catalytic beta subunits, are sandwiched by two outer rings, each composed of seven alpha subunits. The catalytic chamber with the active sites is on the inside of the barrel. Has a gated structure, the ends of the cylinder being occluded by the N-termini of the alpha-subunits. Is capped by the proteasome-associated ATPase, ARC.

It is found in the cytoplasm. The enzyme catalyses Cleavage of peptide bonds with very broad specificity.. Its pathway is protein degradation; proteasomal Pup-dependent pathway. The formation of the proteasomal ATPase ARC-20S proteasome complex, likely via the docking of the C-termini of ARC into the intersubunit pockets in the alpha-rings, may trigger opening of the gate for substrate entry. Interconversion between the open-gate and close-gate conformations leads to a dynamic regulation of the 20S proteasome proteolysis activity. Functionally, component of the proteasome core, a large protease complex with broad specificity involved in protein degradation. This chain is Proteasome subunit beta, found in Parafrankia sp. (strain EAN1pec).